The primary structure comprises 204 residues: uncharacterized protein (204 aa).

The Acyl-thioester intermediate role is filled by C52. Active-site residues include H89 and D104.

It belongs to the arylamine N-acetyltransferase family.

This is an uncharacterized protein from Acanthamoeba polyphaga mimivirus (APMV).